Consider the following 341-residue polypeptide: Phosphoribosylformylglycinamidine cyclo-ligase (341 aa).

It belongs to the AIR synthase family.

It is found in the cytoplasm. It catalyses the reaction 2-formamido-N(1)-(5-O-phospho-beta-D-ribosyl)acetamidine + ATP = 5-amino-1-(5-phospho-beta-D-ribosyl)imidazole + ADP + phosphate + H(+). The protein operates within purine metabolism; IMP biosynthesis via de novo pathway; 5-amino-1-(5-phospho-D-ribosyl)imidazole from N(2)-formyl-N(1)-(5-phospho-D-ribosyl)glycinamide: step 2/2. In Finegoldia magna (strain ATCC 29328 / DSM 20472 / WAL 2508) (Peptostreptococcus magnus), this protein is Phosphoribosylformylglycinamidine cyclo-ligase.